A 1019-amino-acid chain; its full sequence is Clotting factor C (1019 aa).

Residues 1–25 (MVLASFLVSGLVLGILAQQMRPVQS) form the signal peptide. One can recognise an EGF-like domain in the interval 102 to 137 (YGTWCSGECQCKNGGICDQRTGACTCRDRYEGAHCE). 16 disulfides stabilise this stretch: cysteine 110/cysteine 118, cysteine 112/cysteine 125, cysteine 127/cysteine 136, cysteine 142/cysteine 182, cysteine 168/cysteine 195, cysteine 199/cysteine 241, cysteine 227/cysteine 254, cysteine 260/cysteine 308, cysteine 294/cysteine 321, cysteine 331/cysteine 350, cysteine 354/cysteine 374, cysteine 464/cysteine 564, cysteine 538/cysteine 556, cysteine 576/cysteine 621, cysteine 607/cysteine 634, and cysteine 720/cysteine 748. 3 Sushi domains span residues 140–197 (KGCP…KCIR), 198–256 (ECAK…QCKK), and 258–323 (VFCP…SCVK). Residues 325 to 421 (ADREVDCDSK…EELKSLARSF (97 aa)) enclose the LCCL domain. One can recognise a C-type lectin domain in the interval 436 to 568 (CPDGWFEVEE…PSSFACMMDL (133 aa)). N-linked (GlcNAc...) asparagine glycosylation is found at asparagine 523 and asparagine 534. Sushi domains lie at 574-636 (AKCD…RCIK) and 689-750 (PRSS…SCIP). N-linked (GlcNAc...) asparagine glycosylation is found at asparagine 624, asparagine 740, and asparagine 767. The region spanning 763–1019 (IWNGNSTEIG…VFLSWIRQFI (257 aa)) is the Peptidase S1 domain. An intrachain disulfide couples cysteine 794 to cysteine 810. Residues histidine 809 and aspartate 865 each act as charge relay system in the active site. N-linked (GlcNAc...) asparagine glycosylation occurs at asparagine 912. Cysteine 932 and cysteine 951 are disulfide-bonded. A substrate-binding site is contributed by aspartate 960. An intrachain disulfide couples cysteine 962 to cysteine 996. The Charge relay system role is filled by serine 966.

This sequence belongs to the peptidase S1 family. Heterodimer of a light chain and a heavy chain linked by a disulfide bond. Forms a covalent heterodimer with intracellular coagulation inhibitor 1/LICI-1. Forms a covalent heterodimer with intracellular coagulation inhibitor 2/LICI-2. N-glycosylated. Post-translationally, lipopolysaccharide (LPS) activates clotting factor C by inducing the proteolytic cleavage of the clotting factor C light chain into clotting factor C chains A and B. Clotting factor C chains heavy, A and B remain associated via interchain disulfide bonds. Expressed in hemocytes (at protein level).

It localises to the secreted. It carries out the reaction Selective cleavage of 103-Arg-|-Ser-104 and 124-Ile-|-Ile-125 bonds in Limulus clotting factor B to form activated factor B. Cleavage of -Pro-Arg-|-Xaa- bonds in synthetic substrates.. With respect to regulation, activated by Gram-negative bacterial lipopolysaccharides. Inhibited by intracellular coagulation inhibitor 1/LICI-1 and to a lesser extent by intracellular coagulation inhibitors 2/LICI-2 and 3/LICI-3. Inhibited by the small molecule diisopropyl fluorophosphate (DFP). Functionally, this enzyme is closely associated with an endotoxin-sensitive hemolymph coagulation system which may play important roles in both hemostasis and host defense mechanisms. Its active form catalyzes the activation of clotting factor B. In Tachypleus tridentatus (Japanese horseshoe crab), this protein is Clotting factor C.